Consider the following 572-residue polypeptide: Probable pyruvate decarboxylase C186.09 (572 aa).

Residues Asp38 and His125 each contribute to the substrate site. The thiamine pyrophosphate binding stretch occupies residues 400–482 (DSWFGGMRIT…FLINNRGYTI (83 aa)). Residues Asp450, Asn477, and Gly479 each coordinate Mg(2+). A substrate-binding site is contributed by Glu483.

It belongs to the TPP enzyme family. As to quaternary structure, homotetramer. A metal cation is required as a cofactor. Thiamine diphosphate serves as cofactor.

It catalyses the reaction a 2-oxocarboxylate + H(+) = an aldehyde + CO2. This is Probable pyruvate decarboxylase C186.09 from Schizosaccharomyces pombe (strain 972 / ATCC 24843) (Fission yeast).